The chain runs to 390 residues: Heparan sulfate glucosamine 3-O-sulfotransferase 3B1 (390 aa).

Positions 1-25 (MGQRLSGGRSCLDVPGRLLPQPPPP) are disordered. The Cytoplasmic segment spans residues 1–32 (MGQRLSGGRSCLDVPGRLLPQPPPPPPPVRRK). A helical; Signal-anchor for type II membrane protein membrane pass occupies residues 33-53 (LALLFAMLCVWLYMFLYSCAG). Residues 54 to 390 (SCAAAPGLLL…QMTGHDFGWD (337 aa)) lie on the Lumenal side of the membrane. A disordered region spans residues 74–133 (PPALATAPDGTPPRLPFRAPPATPLASGKEMAEGAASPEEQSPEVPDSPSPISSFFSGSG). A compositionally biased stretch (pro residues) spans 83–96 (GTPPRLPFRAPPAT). Residues 123-133 (SPISSFFSGSG) show a composition bias toward low complexity. 147–151 (KGGTR) contributes to the 3'-phosphoadenylyl sulfate binding site. Residues 169–175 (EPHFFDR) and 200–203 (KTPS) each bind substrate. Arginine 228 and serine 236 together coordinate 3'-phosphoadenylyl sulfate. Asparagine 258 is a glycosylation site (N-linked (GlcNAc...) asparagine). 268–269 (WS) provides a ligand contact to substrate. Residue asparagine 329 is glycosylated (N-linked (GlcNAc...) asparagine). An intrachain disulfide couples cysteine 336 to cysteine 348. Residue 353 to 357 (KGRTH) participates in 3'-phosphoadenylyl sulfate binding.

Belongs to the sulfotransferase 1 family. As to expression, ubiquitous. Most abundant in liver and placenta, followed by heart and kidney.

The protein localises to the golgi apparatus membrane. It catalyses the reaction alpha-D-glucosaminyl-[heparan sulfate](n) + 3'-phosphoadenylyl sulfate = 3-sulfo-alpha-D-glucosaminyl-[heparan sulfate](n) + adenosine 3',5'-bisphosphate + H(+). Sulfotransferase that utilizes 3'-phospho-5'-adenylyl sulfate (PAPS) to catalyze the transfer of a sulfo group to an N-unsubstituted glucosamine linked to a 2-O-sulfo iduronic acid unit on heparan sulfate. Catalyzes the O-sulfation of glucosamine in IdoUA2S-GlcNS and also in IdoUA2S-GlcNH2. The substrate-specific O-sulfation generates an enzyme-modified heparan sulfate which acts as a binding receptor to Herpes simplex virus-1 (HSV-1) and permits its entry. Unlike HS3ST1/3-OST-1, does not convert non-anticoagulant heparan sulfate to anticoagulant heparan sulfate. In Homo sapiens (Human), this protein is Heparan sulfate glucosamine 3-O-sulfotransferase 3B1 (HS3ST3B1).